A 276-amino-acid polypeptide reads, in one-letter code: Thymidylate synthase (276 aa).

A dUMP-binding site is contributed by Arg26. His56 provides a ligand contact to (6R)-5,10-methylene-5,6,7,8-tetrahydrofolate. 131-132 (RR) is a dUMP binding site. Cys151 (nucleophile) is an active-site residue. DUMP contacts are provided by residues 178-181 (RSAD), Asn189, and 219-221 (HIY). Asp181 is a binding site for (6R)-5,10-methylene-5,6,7,8-tetrahydrofolate. Ala275 is a (6R)-5,10-methylene-5,6,7,8-tetrahydrofolate binding site.

Belongs to the thymidylate synthase family. Bacterial-type ThyA subfamily. In terms of assembly, homodimer.

The protein resides in the cytoplasm. It catalyses the reaction dUMP + (6R)-5,10-methylene-5,6,7,8-tetrahydrofolate = 7,8-dihydrofolate + dTMP. Its pathway is pyrimidine metabolism; dTTP biosynthesis. Functionally, catalyzes the reductive methylation of 2'-deoxyuridine-5'-monophosphate (dUMP) to 2'-deoxythymidine-5'-monophosphate (dTMP) while utilizing 5,10-methylenetetrahydrofolate (mTHF) as the methyl donor and reductant in the reaction, yielding dihydrofolate (DHF) as a by-product. This enzymatic reaction provides an intracellular de novo source of dTMP, an essential precursor for DNA biosynthesis. In Polaromonas naphthalenivorans (strain CJ2), this protein is Thymidylate synthase.